Consider the following 260-residue polypeptide: Serine protease VLSP-1 (260 aa).

An N-terminal signal peptide occupies residues 1–18; the sequence is MVLIRVLANLLVLHLSYA. The propeptide occupies 19–24; that stretch reads QKSSEL. In terms of domain architecture, Peptidase S1 spans 25-251; sequence VIGGDECNIN…YSDWIQSIIA (227 aa). 6 disulfides stabilise this stretch: Cys-31–Cys-165, Cys-52–Cys-68, Cys-100–Cys-258, Cys-144–Cys-212, Cys-176–Cys-191, and Cys-202–Cys-227. An N-linked (GlcNAc...) asparagine glycan is attached at Asn-44. The Charge relay system role is filled by His-67. Asn-103 carries an N-linked (GlcNAc...) asparagine glycan. The active-site Charge relay system is Asp-112. N-linked (GlcNAc...) asparagine glycosylation is present at Asn-156. The active-site Charge relay system is Ser-206.

Belongs to the peptidase S1 family. Snake venom subfamily. In terms of tissue distribution, expressed by the venom gland.

It localises to the secreted. In terms of biological role, snake venom serine protease that may act in the hemostasis system of the prey. The chain is Serine protease VLSP-1 from Macrovipera lebetinus (Levantine viper).